Reading from the N-terminus, the 433-residue chain is D-amino acid dehydrogenase (433 aa).

An FAD-binding site is contributed by 3 to 17 (VLVLGSGVIGTTSAY).

The protein belongs to the DadA oxidoreductase family. Requires FAD as cofactor.

The catalysed reaction is a D-alpha-amino acid + A + H2O = a 2-oxocarboxylate + AH2 + NH4(+). Functionally, oxidative deamination of D-amino acids. This is D-amino acid dehydrogenase from Pseudomonas syringae pv. tomato (strain ATCC BAA-871 / DC3000).